The primary structure comprises 91 residues: Non-structural protein 3a (91 aa).

The first 19 residues, 1–19, serve as a signal peptide directing secretion; the sequence is MVSFNATAILLVLVANAFS.

The chain is Non-structural protein 3a from Tylonycteris pachypus (Lesser bamboo bat).